Reading from the N-terminus, the 461-residue chain is Argininosuccinate lyase (461 aa).

2-(N(omega)-L-arginino)succinate-binding residues include serine 28, asparagine 115, and threonine 160. The active-site Proton acceptor is the histidine 161. Serine 282 (proton donor) is an active-site residue. The 2-(N(omega)-L-arginino)succinate site is built by asparagine 290, tyrosine 322, glutamine 327, and lysine 330.

Belongs to the lyase 1 family. Argininosuccinate lyase subfamily. Homotetramer.

The enzyme catalyses 2-(N(omega)-L-arginino)succinate = fumarate + L-arginine. It participates in amino-acid biosynthesis; L-arginine biosynthesis; L-arginine from L-ornithine and carbamoyl phosphate: step 3/3. The chain is Argininosuccinate lyase (arg7) from Schizosaccharomyces pombe (strain 972 / ATCC 24843) (Fission yeast).